The primary structure comprises 320 residues: ATP-dependent 6-phosphofructokinase (320 aa).

ATP is bound at residue glycine 12. 22 to 26 (RSVIR) is an ADP binding site. ATP contacts are provided by residues 73–74 (RF) and 103–106 (GDGS). Residue aspartate 104 participates in Mg(2+) binding. Position 126–128 (126–128 (TID)) interacts with substrate. The active-site Proton acceptor is the aspartate 128. Arginine 155 contributes to the ADP binding site. Substrate contacts are provided by residues arginine 163 and 170-172 (MGR). Residues 186–188 (GAE) and 214–216 (KRH) contribute to the ADP site. Substrate-binding positions include glutamate 223, arginine 244, and 250–253 (HIQR).

This sequence belongs to the phosphofructokinase type A (PFKA) family. ATP-dependent PFK group I subfamily. Prokaryotic clade 'B1' sub-subfamily. Homotetramer. Mg(2+) is required as a cofactor.

The protein localises to the cytoplasm. The catalysed reaction is beta-D-fructose 6-phosphate + ATP = beta-D-fructose 1,6-bisphosphate + ADP + H(+). It participates in carbohydrate degradation; glycolysis; D-glyceraldehyde 3-phosphate and glycerone phosphate from D-glucose: step 3/4. Its activity is regulated as follows. Allosterically activated by ADP and other diphosphonucleosides, and allosterically inhibited by phosphoenolpyruvate. In terms of biological role, catalyzes the phosphorylation of D-fructose 6-phosphate to fructose 1,6-bisphosphate by ATP, the first committing step of glycolysis. The chain is ATP-dependent 6-phosphofructokinase from Tolumonas auensis (strain DSM 9187 / NBRC 110442 / TA 4).